An 87-amino-acid chain; its full sequence is uncharacterized protein (87 aa).

A helical transmembrane segment spans residues 42 to 62 (LADALYSAGSAAFTIAASLVA).

It belongs to the SPP1 holin family.

The protein resides in the membrane. This is an uncharacterized protein from Bacillus licheniformis.